Here is a 560-residue protein sequence, read N- to C-terminus: Dihydroxy-acid dehydratase (560 aa).

Position 80 (Asp-80) interacts with Mg(2+). [2Fe-2S] cluster is bound at residue Cys-121. Asp-122 and Lys-123 together coordinate Mg(2+). The residue at position 123 (Lys-123) is an N6-carboxylysine. Cys-194 lines the [2Fe-2S] cluster pocket. Position 447 (Glu-447) interacts with Mg(2+). The active-site Proton acceptor is Ser-473.

This sequence belongs to the IlvD/Edd family. Homodimer. Requires [2Fe-2S] cluster as cofactor. It depends on Mg(2+) as a cofactor.

The enzyme catalyses (2R)-2,3-dihydroxy-3-methylbutanoate = 3-methyl-2-oxobutanoate + H2O. It catalyses the reaction (2R,3R)-2,3-dihydroxy-3-methylpentanoate = (S)-3-methyl-2-oxopentanoate + H2O. It participates in amino-acid biosynthesis; L-isoleucine biosynthesis; L-isoleucine from 2-oxobutanoate: step 3/4. It functions in the pathway amino-acid biosynthesis; L-valine biosynthesis; L-valine from pyruvate: step 3/4. Its function is as follows. Functions in the biosynthesis of branched-chain amino acids. Catalyzes the dehydration of (2R,3R)-2,3-dihydroxy-3-methylpentanoate (2,3-dihydroxy-3-methylvalerate) into 2-oxo-3-methylpentanoate (2-oxo-3-methylvalerate) and of (2R)-2,3-dihydroxy-3-methylbutanoate (2,3-dihydroxyisovalerate) into 2-oxo-3-methylbutanoate (2-oxoisovalerate), the penultimate precursor to L-isoleucine and L-valine, respectively. The protein is Dihydroxy-acid dehydratase of Chloroherpeton thalassium (strain ATCC 35110 / GB-78).